Consider the following 861-residue polypeptide: Protein argonaute-4 (861 aa).

The PAZ domain occupies P219–A338. The 312-residue stretch at L509 to V820 folds into the Piwi domain. The interval D825 to K846 is disordered.

It belongs to the argonaute family. Ago subfamily. Interacts with EIF4B, IMP8, PRMT5, TNRC6A and TNRC6B. Interacts with ZFP36. Ubiquitinated on surface-exposed lysines by a SCF-like E3 ubiquitin-protein ligase complex containing ZSWIM8 during target-directed microRNA degradation (TDMD), a process that mediates degradation of microRNAs (miRNAs). Ubiquitination by the SCF-like E3 ubiquitin-protein ligase complex containing ZSWIM8 leads to its subsequent degradation, thereby exposing miRNAs for degradation. ZSWIM8 recognizes and binds AGO4 when it is engaged with a TDMD target.

Its subcellular location is the cytoplasm. The protein resides in the P-body. Functionally, required for RNA-mediated gene silencing (RNAi). Binds to short RNAs such as microRNAs (miRNAs) and represses the translation of mRNAs which are complementary to them. Lacks endonuclease activity and does not appear to cleave target mRNAs. Also required for RNA-directed transcription and replication of the human hapatitis delta virus (HDV). In Homo sapiens (Human), this protein is Protein argonaute-4 (AGO4).